The primary structure comprises 775 residues: Armadillo-like helical domain-containing protein 4 (775 aa).

An N-terminal signal peptide occupies residues 1–47; sequence MLQDSITGIVNSFNLFFPSTMSRPTLMPTCVAFCSILFLTLATGCQA. Residues 48 to 715 are Extracellular-facing; that stretch reads FPKVERRETA…KDKAGYMSGM (668 aa). An N-linked (GlcNAc...) asparagine glycan is attached at Asn76. Disordered stretches follow at residues 120-148, 247-273, and 324-366; these read AGLL…PGPS, VPGV…DGQS, and KFES…PSST. A compositionally biased stretch (polar residues) spans 129-142; that stretch reads GVYSSSEPVVSASE. Residues 324-335 show a composition bias toward basic and acidic residues; it reads KFESISRGRPPE. Residue Asn476 is glycosylated (N-linked (GlcNAc...) asparagine). The tract at residues 559–669 is disordered; the sequence is IPVLGSPMAP…PGITSQEPDI (111 aa). Polar residues predominate over residues 577 to 599; sequence TISSALPSEGRTSPSISRPNTAA. Residues 606-640 show a composition bias toward acidic residues; sequence LESEEVEDDEDEEDEEDEEEEEEDEEDEEDEEDKE. Residues 716-736 traverse the membrane as a helical segment; sequence LVPVGVGIAGALFILGALYSI. Residues 737–775 lie on the Cytoplasmic side of the membrane; it reads KVMNRRRRNGFKRHKRKQREFNSMQDRVMLLADSSEDEF. Phosphoserine is present on residues Ser770 and Ser771.

As to quaternary structure, interacts with IL6ST; this interaction prevents IL6ST protein homodimerization and bridges ARMH4 with IL6R and STAT3 and therefore inhibits phosphorylation of STAT3 at 'Tyr-705'. Interacts (via cytoplasmic tail) with RICTOR; this interaction bridges ARMH4 to the mTORC2 complex and inhibits the mTORC2 kinase activity. In terms of tissue distribution, expressed in bone-marroew cells.

It is found in the membrane. Functionally, may modulate immune response and may play a role in inflammation. Down-modulates STAT3 signaling throught direct interaction with IL6ST, resulting in the inhibition of phosphorylation of STAT3 at 'Tyr-705'. May negatively regulates AKT signaling by modulating the activity of mTORC2 complex through RICTOR interaction. This Mus musculus (Mouse) protein is Armadillo-like helical domain-containing protein 4.